Here is a 323-residue protein sequence, read N- to C-terminus: Beta-ketoacyl-[acyl-carrier-protein] synthase III (323 aa).

Catalysis depends on residues C114 and H250. Positions 251 to 255 (QANIR) are ACP-binding. N280 is a catalytic residue.

It belongs to the thiolase-like superfamily. FabH family. In terms of assembly, homodimer.

The protein localises to the cytoplasm. The enzyme catalyses malonyl-[ACP] + acetyl-CoA + H(+) = 3-oxobutanoyl-[ACP] + CO2 + CoA. It participates in lipid metabolism; fatty acid biosynthesis. Functionally, catalyzes the condensation reaction of fatty acid synthesis by the addition to an acyl acceptor of two carbons from malonyl-ACP. Catalyzes the first condensation reaction which initiates fatty acid synthesis and may therefore play a role in governing the total rate of fatty acid production. Possesses both acetoacetyl-ACP synthase and acetyl transacylase activities. Its substrate specificity determines the biosynthesis of branched-chain and/or straight-chain of fatty acids. This is Beta-ketoacyl-[acyl-carrier-protein] synthase III from Ruegeria sp. (strain TM1040) (Silicibacter sp.).